The primary structure comprises 448 residues: Probable xyloglucan 6-xylosyltransferase 1 (448 aa).

The Cytoplasmic portion of the chain corresponds to 1–19; sequence MWVAERVVGERRMREIQRF. The chain crosses the membrane as a helical; Signal-anchor for type II membrane protein span at residues 20 to 42; that stretch reads ARNAKLTVVCLLLTVVVLRGTVG. Topologically, residues 43-448 are lumenal; that stretch reads AGKFGTPQQD…AFKAMKTTST (406 aa). Residues 71-113 form a disordered region; sequence HHDALSRGGGSSSSSGRAAQRDDEPDPPPRTLRDPPYTLGPKI. N-linked (GlcNAc...) asparagine glycosylation is present at Asn421.

The protein belongs to the glycosyltransferase 34 family.

Its subcellular location is the golgi apparatus membrane. The catalysed reaction is Transfers an alpha-D-xylosyl residue from UDP-D-xylose to a glucose residue in xyloglucan, forming an alpha-(1-&gt;6)-D-xylosyl-D-glucose linkage.. Its function is as follows. Probable xyloglucan xylosyltransferase involved in the biosynthesis of xyloglucan in roots. This chain is Probable xyloglucan 6-xylosyltransferase 1, found in Oryza sativa subsp. indica (Rice).